A 142-amino-acid chain; its full sequence is Nucleoside diphosphate kinase (142 aa).

ATP-binding residues include Lys-11, Phe-59, Arg-87, Thr-93, Arg-104, and Asn-114. His-117 acts as the Pros-phosphohistidine intermediate in catalysis.

This sequence belongs to the NDK family. In terms of assembly, homotetramer. Mg(2+) serves as cofactor.

Its subcellular location is the cytoplasm. It carries out the reaction a 2'-deoxyribonucleoside 5'-diphosphate + ATP = a 2'-deoxyribonucleoside 5'-triphosphate + ADP. It catalyses the reaction a ribonucleoside 5'-diphosphate + ATP = a ribonucleoside 5'-triphosphate + ADP. Functionally, major role in the synthesis of nucleoside triphosphates other than ATP. The ATP gamma phosphate is transferred to the NDP beta phosphate via a ping-pong mechanism, using a phosphorylated active-site intermediate. The chain is Nucleoside diphosphate kinase from Aeromonas hydrophila subsp. hydrophila (strain ATCC 7966 / DSM 30187 / BCRC 13018 / CCUG 14551 / JCM 1027 / KCTC 2358 / NCIMB 9240 / NCTC 8049).